The chain runs to 200 residues: MSIKPPSALSELVEALRALPGVGPKSAQRIAYHLMQHDREGAERLGRSLLFATEHLRHCEKCNTFTEAQVCEVCSDPERDPALLCVVETPADQIMLEQTMTYRGLYFVLMGRLSPLDGIGPKEIHFDRLVRRASDGIVKEVVLATNFTNEGEATAHYLGQTLKARGLAVTRLARGVPVGGELEYVDAGTIARAMLDRRTL.

A C4-type zinc finger spans residues 59–74 (CEKCNTFTEAQVCEVC). The region spanning 82–177 (ALLCVVETPA…AVTRLARGVP (96 aa)) is the Toprim domain.

It belongs to the RecR family.

Its function is as follows. May play a role in DNA repair. It seems to be involved in an RecBC-independent recombinational process of DNA repair. It may act with RecF and RecO. The protein is Recombination protein RecR of Burkholderia pseudomallei (strain 1106a).